A 732-amino-acid chain; its full sequence is MSMAEMRCPFSGHGAATTPASATTNQHWWPEQINLGLLHQHNPAANPLGSNFDYRQAFNSLDLNAVKADLMALMTDSQSWWPADWGHYGGLFIRMAWHSAGTYRLADGRGGAGHGNQRFAPLNSWPDNTNLDKARRLLWPIKAKYGSNLSWADLIILAGNCALESMGLPTAGFAGGREDIWEPEDDIYWGSETSWLSDERHDNDGAIESPLAATEMGLIYVNPEGPHGEPDPVASGREVRDTFARMGMNNEETVALVAGGHTFGKAHGAAPSAHLGADPEGAALEQLGLGWQNTYASGCGADTITSGIEGAWKPNPTRWDQGYFEMLFGYEWELHQSPAGAWQWHPKDVKAEHMIPDAHVPGRSAPPMMTTADLSLRFDPVYEPIARRFLGDPQAFGNAFAQAWFKLTHRDLGPRSCYLGADVPEAVMSWQDPLPTTSHPTIDAPAVDALKQELLNTGLSHGELISTAWASAASFRQSDRRGGANGARLRLQPQCNWELNNPEQLKRVLSVLEAVQMRFNQQHQGGMQVSLADLIVLSGSAAVEQAMAATGQRCRVRFTPGRVDASAEQTDNASFNALKPIADGFRNYLRSDLPLKAEQLLVDRAQQLHLSAPEMTALIGGFRVLGLNWDGSDIGVFTSRPGQFSNDFFVNLLDMSTQWSPVEGHSNLYQGIDTETKQPRWRASRVDLVFGSHAQLRAIAEVYGQAGGSARLAADFSAAWSKVMELDRFDLL.

The segment at 1–21 (MSMAEMRCPFSGHGAATTPAS) is disordered. A signal peptide spans 1–22 (MSMAEMRCPFSGHGAATTPASA). The segment at residues 97–220 (WHSAGTYRLA…LAATEMGLIY (124 aa)) is a cross-link (tryptophyl-tyrosyl-methioninium (Trp-Tyr) (with M-246)). The active-site Proton acceptor is the histidine 98. A cross-link (tryptophyl-tyrosyl-methioninium (Tyr-Met) (with W-97)) is located at residues 220 to 246 (YVNPEGPHGEPDPVASGREVRDTFARM). Histidine 261 contributes to the heme b binding site.

This sequence belongs to the peroxidase family. Peroxidase/catalase subfamily. In terms of assembly, homodimer or homotetramer. It depends on heme b as a cofactor. Formation of the three residue Trp-Tyr-Met cross-link is important for the catalase, but not the peroxidase activity of the enzyme.

It carries out the reaction H2O2 + AH2 = A + 2 H2O. It catalyses the reaction 2 H2O2 = O2 + 2 H2O. In terms of biological role, bifunctional enzyme with both catalase and broad-spectrum peroxidase activity. The chain is Catalase-peroxidase from Synechococcus sp. (strain RCC307).